The following is a 505-amino-acid chain: Sodium-coupled neutral amino acid transporter 3 (505 aa).

Residues 27-48 (VPTTDTQRTEDTQHCGEGKGFL) form a disordered region. Residues 33-43 (QRTEDTQHCGE) are compositionally biased toward basic and acidic residues. The N-linked (GlcNAc...) asparagine glycan is linked to N73. The next 5 helical transmembrane spans lie at 82–102 (GILG…LFLL), 105–125 (VALL…IVGI), 143–163 (AAAL…LYII), 186–206 (MDGN…LALM), and 212–232 (LGYS…AVIY). A disulfide bridge connects residues C239 and C276. Residues N247 and N251 are each glycosylated (N-linked (GlcNAc...) asparagine). Residues 288 to 308 (AYTIPIMAFAFVCHPEVLPIY) traverse the membrane as a helical segment. A glycan (N-linked (GlcNAc...) asparagine) is linked at N324. A run of 5 helical transmembrane segments spans residues 325 to 345 (LSIA…YLTF), 367 to 387 (ILCV…IVLF), 409 to 429 (VLIA…APNI), 432 to 452 (IFGI…PAIF), and 472 to 492 (ALCF…FIII).

This sequence belongs to the amino acid/polyamine transporter 2 family. As to expression, expressed predominantly in liver, moderately expressed in kidney and brain, and barely detectable in heart and muscle. Within liver, expressed in hepatocytes. Not detected in testis. Expressed in cells of the ganglion cell layer, in soma of some cells of the inner nuclear layer (at protein level). Expressed in the inner segments of photoreceptor cells.

Its subcellular location is the cell membrane. It is found in the basolateral cell membrane. The catalysed reaction is L-histidine(out) + Na(+)(out) + H(+)(in) = L-histidine(in) + Na(+)(in) + H(+)(out). It catalyses the reaction L-glutamine(out) + Na(+)(out) + H(+)(in) = L-glutamine(in) + Na(+)(in) + H(+)(out). It carries out the reaction L-asparagine(out) + Na(+)(out) + H(+)(in) = L-asparagine(in) + Na(+)(in) + H(+)(out). Its function is as follows. Symporter that cotransports specific neutral amino acids and sodium ions, coupled to an H(+) antiporter activity. Mainly participates in the glutamate-GABA-glutamine cycle in brain where it transports L-glutamine from astrocytes in the intercellular space for the replenishment of both neurotransmitters glutamate and gamma-aminobutyric acid (GABA) in neurons and also functions as the major influx transporter in ganglion cells mediating the uptake of glutamine. The transport activity is specific for L-glutamine, L-histidine and L-asparagine. The transport is electroneutral coupled to the cotransport of 1 Na(+) and the antiport of 1 H(+). The transport is pH dependent, saturable, Li(+) tolerant and functions in both direction depending on the concentration gradients of its substrates and cotransported ions. Also mediates an amino acid-gated H(+) conductance that is not stoichiometrically coupled to the amino acid transport but which influences the ionic gradients that drive the amino acid transport. In addition, may play a role in nitrogen metabolism, amino acid homeostasis, glucose metabolism and renal ammoniagenesis. This Mus musculus (Mouse) protein is Sodium-coupled neutral amino acid transporter 3.